The chain runs to 648 residues: Replication restart protein PriA (648 aa).

The Helicase ATP-binding domain occupies 131–297; that stretch reads TILNESNKPT…EIGKYQLVTL (167 aa). 144–151 provides a ligand contact to ATP; the sequence is GVTGSGKT. The short motif at 240 to 243 is the DEAH box element; that stretch reads DEEH. Cysteine 358, cysteine 361, cysteine 367, cysteine 370, cysteine 385, cysteine 388, cysteine 398, and cysteine 401 together coordinate Zn(2+). The 156-residue stretch at 393–548 folds into the Helicase C-terminal domain; sequence KIFSSCPECL…SFFANELEIR (156 aa).

Belongs to the helicase family. PriA subfamily. In terms of assembly, component of the replication restart primosome. It depends on Zn(2+) as a cofactor.

It carries out the reaction Couples ATP hydrolysis with the unwinding of duplex DNA by translocating in the 3'-5' direction.. The enzyme catalyses ATP + H2O = ADP + phosphate + H(+). Functionally, initiates the restart of stalled replication forks, which reloads the replicative helicase on sites other than the origin of replication. Recognizes and binds to abandoned replication forks and remodels them to uncover a helicase loading site. Promotes assembly of the primosome at these replication forks. The polypeptide is Replication restart protein PriA (Rickettsia felis (strain ATCC VR-1525 / URRWXCal2) (Rickettsia azadi)).